A 385-amino-acid polypeptide reads, in one-letter code: Probable dual-specificity RNA methyltransferase RlmN (385 aa).

The segment at 1 to 24 (MTATTAESGNLLPLVSGRSRPPRH) is disordered. E114 (proton acceptor) is an active-site residue. A Radical SAM core domain is found at 120–364 (YPQRATVCVS…AATVRDTRGR (245 aa)). C127 and C370 are oxidised to a cystine. Positions 134, 138, and 141 each coordinate [4Fe-4S] cluster. Residues 194 to 195 (GE), S228, 251 to 253 (SLH), and N327 contribute to the S-adenosyl-L-methionine site. C370 acts as the S-methylcysteine intermediate in catalysis.

It belongs to the radical SAM superfamily. RlmN family. The cofactor is [4Fe-4S] cluster.

The protein resides in the cytoplasm. It carries out the reaction adenosine(2503) in 23S rRNA + 2 reduced [2Fe-2S]-[ferredoxin] + 2 S-adenosyl-L-methionine = 2-methyladenosine(2503) in 23S rRNA + 5'-deoxyadenosine + L-methionine + 2 oxidized [2Fe-2S]-[ferredoxin] + S-adenosyl-L-homocysteine. The enzyme catalyses adenosine(37) in tRNA + 2 reduced [2Fe-2S]-[ferredoxin] + 2 S-adenosyl-L-methionine = 2-methyladenosine(37) in tRNA + 5'-deoxyadenosine + L-methionine + 2 oxidized [2Fe-2S]-[ferredoxin] + S-adenosyl-L-homocysteine. Specifically methylates position 2 of adenine 2503 in 23S rRNA and position 2 of adenine 37 in tRNAs. The chain is Probable dual-specificity RNA methyltransferase RlmN from Parafrankia sp. (strain EAN1pec).